The primary structure comprises 124 residues: Acidic phospholipase A2 (124 aa).

Cystine bridges form between Cys26–Cys117, Cys28–Cys44, Cys43–Cys97, Cys49–Cys124, Cys50–Cys90, Cys57–Cys83, and Cys77–Cys88. Ca(2+)-binding residues include Tyr27, Gly29, and Gly31. The active site involves His47. Asp48 contacts Ca(2+). The active site involves Glu89.

The protein belongs to the phospholipase A2 family. Group II subfamily. D49 sub-subfamily. Requires Ca(2+) as cofactor. In terms of tissue distribution, expressed by the venom gland.

The protein resides in the secreted. The enzyme catalyses a 1,2-diacyl-sn-glycero-3-phosphocholine + H2O = a 1-acyl-sn-glycero-3-phosphocholine + a fatty acid + H(+). Snake venom phospholipase A2 (PLA2) that inhibits collagen- and ADP-induced platelet aggregation. PLA2 catalyzes the calcium-dependent hydrolysis of the 2-acyl groups in 3-sn-phosphoglycerides. The polypeptide is Acidic phospholipase A2 (Bothrops jararaca (Jararaca)).